The sequence spans 351 residues: UDP-N-acetylglucosamine--N-acetylmuramyl-(pentapeptide) pyrophosphoryl-undecaprenol N-acetylglucosamine transferase (351 aa).

Residues 13–15 (TGG), N125, R161, S189, I241, 260–265 (ALTVCE), and Q285 contribute to the UDP-N-acetyl-alpha-D-glucosamine site.

This sequence belongs to the glycosyltransferase 28 family. MurG subfamily.

The protein localises to the cell inner membrane. It catalyses the reaction di-trans,octa-cis-undecaprenyl diphospho-N-acetyl-alpha-D-muramoyl-L-alanyl-D-glutamyl-meso-2,6-diaminopimeloyl-D-alanyl-D-alanine + UDP-N-acetyl-alpha-D-glucosamine = di-trans,octa-cis-undecaprenyl diphospho-[N-acetyl-alpha-D-glucosaminyl-(1-&gt;4)]-N-acetyl-alpha-D-muramoyl-L-alanyl-D-glutamyl-meso-2,6-diaminopimeloyl-D-alanyl-D-alanine + UDP + H(+). Its pathway is cell wall biogenesis; peptidoglycan biosynthesis. Functionally, cell wall formation. Catalyzes the transfer of a GlcNAc subunit on undecaprenyl-pyrophosphoryl-MurNAc-pentapeptide (lipid intermediate I) to form undecaprenyl-pyrophosphoryl-MurNAc-(pentapeptide)GlcNAc (lipid intermediate II). The chain is UDP-N-acetylglucosamine--N-acetylmuramyl-(pentapeptide) pyrophosphoryl-undecaprenol N-acetylglucosamine transferase from Haemophilus influenzae (strain PittEE).